Here is a 714-residue protein sequence, read N- to C-terminus: Fatty acid oxidation complex subunit alpha (714 aa).

The segment at 1-190 (MEMASAFTLN…KLGLVDDVVP (190 aa)) is enoyl-CoA hydratase. A 3-hydroxyacyl-CoA dehydrogenase region spans residues 306 to 714 (APLNSVGILG…FWKTTATDLQ (409 aa)).

It in the N-terminal section; belongs to the enoyl-CoA hydratase/isomerase family. This sequence in the central section; belongs to the 3-hydroxyacyl-CoA dehydrogenase family. Heterotetramer of two alpha chains (FadJ) and two beta chains (FadI).

The protein localises to the cytoplasm. The catalysed reaction is a (3S)-3-hydroxyacyl-CoA = a (2E)-enoyl-CoA + H2O. It carries out the reaction a 4-saturated-(3S)-3-hydroxyacyl-CoA = a (3E)-enoyl-CoA + H2O. The enzyme catalyses a (3S)-3-hydroxyacyl-CoA + NAD(+) = a 3-oxoacyl-CoA + NADH + H(+). It catalyses the reaction (3S)-3-hydroxybutanoyl-CoA = (3R)-3-hydroxybutanoyl-CoA. The protein operates within lipid metabolism; fatty acid beta-oxidation. In terms of biological role, catalyzes the formation of a hydroxyacyl-CoA by addition of water on enoyl-CoA. Also exhibits 3-hydroxyacyl-CoA epimerase and 3-hydroxyacyl-CoA dehydrogenase activities. The polypeptide is Fatty acid oxidation complex subunit alpha (Escherichia coli (strain UTI89 / UPEC)).